Consider the following 616-residue polypeptide: Dihydroxy-acid dehydratase (616 aa).

Residue D81 participates in Mg(2+) binding. C122 serves as a coordination point for [2Fe-2S] cluster. 2 residues coordinate Mg(2+): D123 and K124. An N6-carboxylysine modification is found at K124. [2Fe-2S] cluster is bound at residue C195. Residue E491 participates in Mg(2+) binding. S517 (proton acceptor) is an active-site residue.

The protein belongs to the IlvD/Edd family. As to quaternary structure, homodimer. [2Fe-2S] cluster is required as a cofactor. Mg(2+) serves as cofactor.

It catalyses the reaction (2R)-2,3-dihydroxy-3-methylbutanoate = 3-methyl-2-oxobutanoate + H2O. The catalysed reaction is (2R,3R)-2,3-dihydroxy-3-methylpentanoate = (S)-3-methyl-2-oxopentanoate + H2O. The protein operates within amino-acid biosynthesis; L-isoleucine biosynthesis; L-isoleucine from 2-oxobutanoate: step 3/4. Its pathway is amino-acid biosynthesis; L-valine biosynthesis; L-valine from pyruvate: step 3/4. Functions in the biosynthesis of branched-chain amino acids. Catalyzes the dehydration of (2R,3R)-2,3-dihydroxy-3-methylpentanoate (2,3-dihydroxy-3-methylvalerate) into 2-oxo-3-methylpentanoate (2-oxo-3-methylvalerate) and of (2R)-2,3-dihydroxy-3-methylbutanoate (2,3-dihydroxyisovalerate) into 2-oxo-3-methylbutanoate (2-oxoisovalerate), the penultimate precursor to L-isoleucine and L-valine, respectively. The protein is Dihydroxy-acid dehydratase of Azoarcus sp. (strain BH72).